A 454-amino-acid polypeptide reads, in one-letter code: DNA-binding protein BIN4 (454 aa).

Disordered regions lie at residues 24-53, 103-249, and 380-454; these read LLSL…DDGD, AGKE…DKDT, and TFES…KAKK. Positions 112–123 are enriched in basic and acidic residues; the sequence is DCEKLSSKHKDA. Over residues 132–150 the composition is skewed to polar residues; the sequence is LVSSDSEPSSPIKQEVTVS. Positions 229–249 are enriched in basic and acidic residues; that stretch reads TPKEENCAQEILKTEDKDKDT. The segment covering 438 to 454 has biased composition (basic residues); sequence PAKKARNSAPKKPKAKK.

In terms of assembly, interacts with TOP6A, RHL1 and itself, but not with TOP6B. In terms of tissue distribution, expressed in expanding cotyledons, vascular cells, elongating root cells, developing leaf trichomes, root and apical meristems and lateral root primordia.

It is found in the nucleus. In terms of biological role, component of the DNA topoisomerase VI complex. Binds to DNA. Required for chromatin organization and progression of endoreduplication cycles. The loss of BIN4 activates the ATM- and ATR-dependent DNA damage responses in postmitotic cells and induces the ectopic expression of the mitotic G2/M-specific cyclin B1;1 gene in non-dividing cells. This is DNA-binding protein BIN4 (BIN4) from Arabidopsis thaliana (Mouse-ear cress).